A 768-amino-acid chain; its full sequence is Dual specificity calcium/calmodulin-dependent 3',5'-cyclic nucleotide phosphodiesterase 1C (768 aa).

Position 1 is an N-acetylmethionine (M1). The segment at 183–206 (EKPRFKSIVHAVQAGIFVERMYRR) is calmodulin-binding. The PDEase domain maps to 211–588 (VGLSYPPAVI…ERWRAKVPKE (378 aa)). H288 acts as the Proton donor in catalysis. Zn(2+) is bound by residues H292, H328, D329, and D436. A Mg(2+)-binding site is contributed by D329. Disordered stretches follow at residues 513–557 (LIDE…INNS) and 584–719 (KVPK…PPLR). Polar residues-rich tracts occupy residues 516–536 (ETSQ…INSS) and 543–557 (VKSS…INNS). Residues 584-614 (KVPKEEKAKKEAEEKARLAAEEKQKEMEAKS) show a composition bias toward basic and acidic residues. Positions 631-641 (ETKGQVNGTRT) are enriched in polar residues. Basic and acidic residues-rich tracts occupy residues 642–659 (SKGD…KAGE) and 665–692 (DLKD…DGTK). Residues 698-712 (SPAPSTSSTSRLTLP) show a composition bias toward low complexity.

This sequence belongs to the cyclic nucleotide phosphodiesterase family. PDE1 subfamily. As to quaternary structure, homodimer. Zn(2+) serves as cofactor. Mg(2+) is required as a cofactor. As to expression, highly expressed in olfactory epithelium and at moderate levels, in cerebellum, as well as weakly in forebrain, testis, heart and lung. In the olfactory epithelium, expressed by sensory neurons, but not epithelial cells.

Its subcellular location is the lysosome. The enzyme catalyses a nucleoside 3',5'-cyclic phosphate + H2O = a nucleoside 5'-phosphate + H(+). The catalysed reaction is 3',5'-cyclic GMP + H2O = GMP + H(+). It catalyses the reaction 3',5'-cyclic AMP + H2O = AMP + H(+). With respect to regulation, type I PDE are activated by the binding of calmodulin in the presence of Ca(2+). In terms of biological role, calmodulin-dependent cyclic nucleotide phosphodiesterase with a dual specificity for the second messengers cAMP and cGMP, which are key regulators of many important physiological processes. Has a high affinity for both cAMP and cGMP. Modulates the amplitude and duration of the cAMP signal in sensory cilia in response to odorant stimulation, hence contributing to the generation of action potentials. Regulates smooth muscle cell proliferation. Regulates the stability of growth factor receptors, including PDGFRB. The polypeptide is Dual specificity calcium/calmodulin-dependent 3',5'-cyclic nucleotide phosphodiesterase 1C (Rattus norvegicus (Rat)).